Consider the following 328-residue polypeptide: uncharacterized protein (328 aa).

The G-patch domain occupies 10–55 (KMGFGHAMLLKMGWKGKGLGVEEDGRTEIIVNKKKQDKVGVGASIS). Residues 97–291 (EKITFKRTIK…KKSFSVSKTR (195 aa)) are disordered. Residues 101 to 110 (FKRTIKKNSK) are compositionally biased toward basic residues. The segment covering 116 to 126 (SDSDSDSDSES) has biased composition (acidic residues). 2 stretches are compositionally biased toward low complexity: residues 141-158 (DSDS…SSSS) and 210-240 (SSSS…SSSE). The span at 248–257 (KNKNKNKNKK) shows a compositional bias: basic residues.

This is an uncharacterized protein from Dictyostelium discoideum (Social amoeba).